Consider the following 326-residue polypeptide: Glycerol-3-phosphate dehydrogenase [NAD(P)+] (326 aa).

NADPH-binding residues include S10, F11, R31, and K108. K108, G136, and S138 together coordinate sn-glycerol 3-phosphate. A140 serves as a coordination point for NADPH. Residues K191, D246, S256, R257, and N258 each contribute to the sn-glycerol 3-phosphate site. K191 (proton acceptor) is an active-site residue. R257 is a binding site for NADPH. Residues I281 and E283 each contribute to the NADPH site.

It belongs to the NAD-dependent glycerol-3-phosphate dehydrogenase family.

It is found in the cytoplasm. It carries out the reaction sn-glycerol 3-phosphate + NAD(+) = dihydroxyacetone phosphate + NADH + H(+). It catalyses the reaction sn-glycerol 3-phosphate + NADP(+) = dihydroxyacetone phosphate + NADPH + H(+). The protein operates within membrane lipid metabolism; glycerophospholipid metabolism. Its function is as follows. Catalyzes the reduction of the glycolytic intermediate dihydroxyacetone phosphate (DHAP) to sn-glycerol 3-phosphate (G3P), the key precursor for phospholipid synthesis. This is Glycerol-3-phosphate dehydrogenase [NAD(P)+] from Ehrlichia chaffeensis (strain ATCC CRL-10679 / Arkansas).